The chain runs to 146 residues: Ribosomal RNA large subunit methyltransferase H (146 aa).

S-adenosyl-L-methionine is bound by residues Leu68, Gly95, and 114–119 (LSSLTF).

This sequence belongs to the RNA methyltransferase RlmH family. As to quaternary structure, homodimer.

The protein resides in the cytoplasm. It carries out the reaction pseudouridine(1915) in 23S rRNA + S-adenosyl-L-methionine = N(3)-methylpseudouridine(1915) in 23S rRNA + S-adenosyl-L-homocysteine + H(+). Functionally, specifically methylates the pseudouridine at position 1915 (m3Psi1915) in 23S rRNA. The sequence is that of Ribosomal RNA large subunit methyltransferase H from Thermodesulfovibrio yellowstonii (strain ATCC 51303 / DSM 11347 / YP87).